We begin with the raw amino-acid sequence, 132 residues long: Large ribosomal subunit protein bL21 (132 aa).

The disordered stretch occupies residues 111–132 (AAEKPARKPRAKKTNEVTTDGA).

Belongs to the bacterial ribosomal protein bL21 family. In terms of assembly, part of the 50S ribosomal subunit. Contacts protein L20.

This protein binds to 23S rRNA in the presence of protein L20. The polypeptide is Large ribosomal subunit protein bL21 (Dehalococcoides mccartyi (strain CBDB1)).